A 286-amino-acid chain; its full sequence is Nucleotide-binding protein Sfum_2066 (286 aa).

G8–S15 is a binding site for ATP. Position 59–62 (D59–E62) interacts with GTP.

Belongs to the RapZ-like family.

Functionally, displays ATPase and GTPase activities. The protein is Nucleotide-binding protein Sfum_2066 of Syntrophobacter fumaroxidans (strain DSM 10017 / MPOB).